The primary structure comprises 288 residues: Ankyrin repeat and SOCS box protein 8 (288 aa).

Serine 17 is modified (phosphoserine). 4 ANK repeats span residues 52 to 81 (GTLK…EVNA), 85 to 113 (YNRT…NPNA), 117 to 146 (NRDT…SVNA), and 150 to 179 (NNDT…EVRV). Positions 235-288 (QLCEKLTVLCSAPGTLKTLARYAVRRSLGLQYLPDAVKGLPLPASLKEYLLLLE) constitute an SOCS box domain.

This sequence belongs to the ankyrin SOCS box (ASB) family. In terms of assembly, interacts with TBK1; this interaction promotes TBK1 proteasomal degradation. Phosphorylated by TBK1. Highest level of expression in skeletal muscle. Also expressed in heart, brain, placenta, liver, kidney and pancreas.

It localises to the cytoplasm. Its pathway is protein modification; protein ubiquitination. May be a substrate-recognition component of a SCF-like ECS (Elongin-Cullin-SOCS-box protein) E3 ubiquitin-protein ligase complex which mediates the ubiquitination and subsequent proteasomal degradation of target proteins. Inhibits IFN-beta production through the IRF3 signaling pathway by targeting TBK1 via 'Lys-48'-linked ubiquitination, leading to its proteasomal degradation. This is Ankyrin repeat and SOCS box protein 8 (ASB8) from Homo sapiens (Human).